The following is a 98-amino-acid chain: Large ribosomal subunit protein eL21 (98 aa).

This sequence belongs to the eukaryotic ribosomal protein eL21 family.

The polypeptide is Large ribosomal subunit protein eL21 (Korarchaeum cryptofilum (strain OPF8)).